A 587-amino-acid polypeptide reads, in one-letter code: DELLA protein GAIP-B (587 aa).

A disordered region spans residues 1–23 (MKREHHHLHPRPDPPSMAAAPNG). The short motif at 46–50 (DELLA) is the DELLA motif element. The GRAS domain occupies 209–577 (VDSQENGIQL…RPLIVTSAWK (369 aa)). A leucine repeat I (LRI) region spans residues 216–270 (IQLVHALMACAEAVQQNNLNLAEALEKRIGYLAVSQAGAMRKVATFFAEALARRI). Residues 288-353 (QLHFYESSPY…SGPPAFRLTG (66 aa)) form a VHIID region. The short motif at 319–323 (VHVID) is the VHIID element. A leucine repeat II (LRII) region spans residues 367 to 399 (DVGWKLAKLVETINVEFEYRGFVANSLADLDAS). The tract at residues 411–498 (VVVNSVFELH…EMYLGKQICN (88 aa)) is PFYRE. The LXXLL motif motif lies at 419 to 423 (LHKLL). The SAW stretch occupies residues 501–577 (ACEGSDRVEW…RPLIVTSAWK (77 aa)).

This sequence belongs to the GRAS family. DELLA subfamily. Phosphorylated. Post-translationally, ubiquitinated. Upon GA application it is ubiquitinated, leading to its subsequent degradation.

Its subcellular location is the nucleus. Its function is as follows. Probable transcriptional regulator that acts as a repressor of the gibberellin (GA) signaling pathway. Probably acts by participating in large multiprotein complexes that represses transcription of GA-inducible genes. Upon GA application, it is degraded by the proteasome, allowing the GA signaling pathway. The chain is DELLA protein GAIP-B (GAIPB) from Cucurbita maxima (Pumpkin).